We begin with the raw amino-acid sequence, 278 residues long: Formamidopyrimidine-DNA glycosylase (278 aa).

Pro-2 functions as the Schiff-base intermediate with DNA in the catalytic mechanism. Glu-3 serves as the catalytic Proton donor. The active-site Proton donor; for beta-elimination activity is the Lys-59. Residues His-94, Arg-113, and Lys-154 each coordinate DNA. The segment at 239–273 (KVHTKKGEFCIKCSSKIEKIKFKGRGTYFCPTCQK) adopts an FPG-type zinc-finger fold. Catalysis depends on Arg-263, which acts as the Proton donor; for delta-elimination activity.

It belongs to the FPG family. In terms of assembly, monomer. Zn(2+) is required as a cofactor.

It catalyses the reaction Hydrolysis of DNA containing ring-opened 7-methylguanine residues, releasing 2,6-diamino-4-hydroxy-5-(N-methyl)formamidopyrimidine.. The catalysed reaction is 2'-deoxyribonucleotide-(2'-deoxyribose 5'-phosphate)-2'-deoxyribonucleotide-DNA = a 3'-end 2'-deoxyribonucleotide-(2,3-dehydro-2,3-deoxyribose 5'-phosphate)-DNA + a 5'-end 5'-phospho-2'-deoxyribonucleoside-DNA + H(+). Its function is as follows. Involved in base excision repair of DNA damaged by oxidation or by mutagenic agents. Acts as a DNA glycosylase that recognizes and removes damaged bases. Has a preference for oxidized purines, such as 7,8-dihydro-8-oxoguanine (8-oxoG). Has AP (apurinic/apyrimidinic) lyase activity and introduces nicks in the DNA strand. Cleaves the DNA backbone by beta-delta elimination to generate a single-strand break at the site of the removed base with both 3'- and 5'-phosphates. This Mycoplasmopsis pulmonis (strain UAB CTIP) (Mycoplasma pulmonis) protein is Formamidopyrimidine-DNA glycosylase (mutM).